The sequence spans 171 residues: Secretion monitor (171 aa).

The N-terminal stretch at 1 to 36 (MIGILNRWRQFGRRYFWPHLLLGMVAASLGLPTSLN) is a signal peptide.

It belongs to the SecM family.

Its subcellular location is the cytoplasm. It localises to the cytosol. The protein localises to the periplasm. Functionally, regulates secA expression by translational coupling of the secM secA operon. Translational pausing at a specific Pro residue 5 residues before the end of the protein may allow disruption of a mRNA repressor helix that normally suppresses secA translation initiation. This chain is Secretion monitor, found in Pectobacterium carotovorum subsp. carotovorum (strain PC1).